Here is a 395-residue protein sequence, read N- to C-terminus: Inactive serine protease 54 (395 aa).

Positions 1–30 (MVSAAGLSGDGKMRGVLLVLLGLLYSSTSC) are cleaved as a signal peptide. Residues 37-269 (VFYGPDPKEG…YSKWITSKAE (233 aa)) form the Peptidase S1 domain. Asn-123 is a glycosylation site (N-linked (GlcNAc...) asparagine). 3 cysteine pairs are disulfide-bonded: Cys-164–Cys-227, Cys-195–Cys-205, and Cys-217–Cys-248. Residues 324–348 (RLGNSSRDSLDVREKDVKESGRSPE) form a disordered region. Residue Asn-327 is glycosylated (N-linked (GlcNAc...) asparagine). Over residues 331–345 (DSLDVREKDVKESGR) the composition is skewed to basic and acidic residues.

This sequence belongs to the peptidase S1 family. Plasma kallikrein subfamily.

The protein localises to the secreted. This is Inactive serine protease 54 (PRSS54) from Homo sapiens (Human).